Reading from the N-terminus, the 591-residue chain is Phenylalanine--tRNA ligase beta subunit (591 aa).

A B5 domain is found at 304-380; the sequence is LSYREMTVTT…VAFGYNNLIT (77 aa). Mg(2+) contacts are provided by D358, D364, E367, and D368.

Belongs to the phenylalanyl-tRNA synthetase beta subunit family. Type 2 subfamily. Tetramer of two alpha and two beta subunits. Mg(2+) is required as a cofactor.

The protein resides in the cytoplasm. It catalyses the reaction tRNA(Phe) + L-phenylalanine + ATP = L-phenylalanyl-tRNA(Phe) + AMP + diphosphate + H(+). In Caenorhabditis elegans, this protein is Phenylalanine--tRNA ligase beta subunit.